Here is a 726-residue protein sequence, read N- to C-terminus: L-lysine 6-oxidase (726 aa).

A cross-link (4'-cysteinyl-tryptophylquinone (Cys-Trp)) is located at residues 516 to 581 (CTIQTVNFSE…LPPAYYSYWW (66 aa)). Tryptophylquinone is present on Trp581.

As to quaternary structure, homotetramer. Cysteine tryptophylquinone residue serves as cofactor. Post-translationally, the cysteine tryptophylquinone (CTQ) is generated by oxidation of the indole ring of a tryptophan residue to form tryptophylquinone, followed by covalent cross-linking with a cysteine residue.

It is found in the secreted. It catalyses the reaction L-lysine + O2 + H2O = (S)-2-amino-6-oxohexanoate + H2O2 + NH4(+). With respect to regulation, inhibited by aminoguanidine, amiloride and beta-aminopropionitrile. In terms of biological role, has antibacterial activity against a wide spectrum of Gram-positive and Gram-negative bacteria including nosocomial isolates of S.aureus and Pseudomonas sp. The antimicrobial activity is due to hydrogen peroxide generated by its lysine oxidase activity. Also has autotoxic activity. Involved in biofilm differentiation; responsible for cell death within microcolonies during biofilm development which is linked to the generation of a phenotypically diverse dispersal population and thus may play a role in colonization. This is L-lysine 6-oxidase (lodA) from Marinomonas mediterranea (strain ATCC 700492 / JCM 21426 / NBRC 103028 / MMB-1).